The chain runs to 43 residues: Defensin, isoforms B and C (43 aa).

3 disulfides stabilise this stretch: Cys-3/Cys-34, Cys-20/Cys-40, and Cys-24/Cys-42.

The protein belongs to the invertebrate defensin family. Type 1 subfamily.

The protein localises to the secreted. In terms of biological role, involved in anti Gram-positive activity of immune hemolymph of Z.atratus. The polypeptide is Defensin, isoforms B and C (Zophobas atratus (Giant mealworm beetle)).